A 137-amino-acid polypeptide reads, in one-letter code: Large ribosomal subunit protein uL16c (137 aa).

Residues 1–21 (MLSPKRTKFRRHHRGRMKGKA) are disordered.

This sequence belongs to the universal ribosomal protein uL16 family. Part of the 50S ribosomal subunit.

It localises to the plastid. The protein resides in the chloroplast. This chain is Large ribosomal subunit protein uL16c, found in Tupiella akineta (Green alga).